The primary structure comprises 567 residues: 2-succinyl-5-enolpyruvyl-6-hydroxy-3-cyclohexene-1-carboxylate synthase (567 aa).

Belongs to the TPP enzyme family. MenD subfamily. Homodimer. The cofactor is Mg(2+). It depends on Mn(2+) as a cofactor. Thiamine diphosphate serves as cofactor.

The enzyme catalyses isochorismate + 2-oxoglutarate + H(+) = 5-enolpyruvoyl-6-hydroxy-2-succinyl-cyclohex-3-ene-1-carboxylate + CO2. It participates in quinol/quinone metabolism; 1,4-dihydroxy-2-naphthoate biosynthesis; 1,4-dihydroxy-2-naphthoate from chorismate: step 2/7. It functions in the pathway quinol/quinone metabolism; menaquinone biosynthesis. In terms of biological role, catalyzes the thiamine diphosphate-dependent decarboxylation of 2-oxoglutarate and the subsequent addition of the resulting succinic semialdehyde-thiamine pyrophosphate anion to isochorismate to yield 2-succinyl-5-enolpyruvyl-6-hydroxy-3-cyclohexene-1-carboxylate (SEPHCHC). This is 2-succinyl-5-enolpyruvyl-6-hydroxy-3-cyclohexene-1-carboxylate synthase from Shewanella loihica (strain ATCC BAA-1088 / PV-4).